The sequence spans 134 residues: Large ribosomal subunit protein eL27 (134 aa).

In terms of domain architecture, KOW spans 5–40; the sequence is LKSGKVVVVLSGRFAGKKAVIVRNFDDGTSSRPYGH.

The protein belongs to the eukaryotic ribosomal protein eL27 family.

This is Large ribosomal subunit protein eL27 (RPL27) from Pyrobotrys stellatus (Green alga).